A 556-amino-acid polypeptide reads, in one-letter code: MKTDIEIAQSVDLRPITNVVKKLGFDFDDLELYGKYKAKLTFDKIKAVEENAPGKLVLVTAINPTPAGEGKSTITIGLADALNKIGKKTMIAIREPSLGPVMGIKGGAAGGGYAQVLPMEDINLHFTGDMHAITTANNALSALIDNHLHQGNELGIDQRRIIWKRVVDLNDRALRHVTVGLGSPINGIPREDGFDITVASEIMAILCLATNVEDLKERLANIVIGYRFDRSPVYVRDLEVQGALALILKEAIKPNLVQTIYGTPAFVHGGPFANIAHGCNSVLATSTALRLADYTITEAGFGADLGAEKFLDIKAPNLPTSPDAVVIVATIRALKMNGGVAKDALNQENVEAVKAGFANLARHVENMRKYGVPVVVAINEFITDTNDEIAVLRNLCAAIDVPVELASVWANGADGGVDLANTLINTIENNPSHYKRLYDNNLSVEEKVTEIAKEIYRADKVIFEKKAKTQIAQIVKNGWDNLPICMAKTQYSFSDDPKLLGAPTGFDITIRELVPKLGAGFIVALTGDVMTMPGLPKKPAALNMDVAADGTALGLF.

65 to 72 (TPAGEGKS) is a binding site for ATP.

It belongs to the formate--tetrahydrofolate ligase family.

The enzyme catalyses (6S)-5,6,7,8-tetrahydrofolate + formate + ATP = (6R)-10-formyltetrahydrofolate + ADP + phosphate. Its pathway is one-carbon metabolism; tetrahydrofolate interconversion. The chain is Formate--tetrahydrofolate ligase from Streptococcus mutans serotype c (strain ATCC 700610 / UA159).